Consider the following 205-residue polypeptide: Pectinesterase inhibitor 3 (205 aa).

The N-terminal stretch at 1–25 (MAPTQNLFLVAIAFAVIFTASTVHG) is a signal peptide. 2 disulfides stabilise this stretch: Cys-38–Cys-47 and Cys-104–Cys-156.

Belongs to the PMEI family. As to expression, expressed in apical meristem.

It localises to the secreted. It is found in the extracellular space. The protein localises to the apoplast. Pectin methylesterase (PME) inhibitor that can target PMEs (e.g. PME2 and PME3) in a pH-dependent manner, mainly in slightly acidic conditions (pH 6.3 and 5.0) but not at pH 7.5; this processus relies on changes in the protonation of amino acids involved in intermolecular and intramolecular interactions. Regulates de-methylesterification of pectins in the apical meristem and affects primordia formation and phyllotactic patterning. This chain is Pectinesterase inhibitor 3, found in Arabidopsis thaliana (Mouse-ear cress).